We begin with the raw amino-acid sequence, 156 residues long: MRIGMGYDVHKLVENRDLILGGVKIPYEKGLLGHSDADVLLHAIMDSLLGAAALGDIGKHFPDTDPKYKGADSIKLLEFVGELLNKNNYKISNIDATIIAQRPKMAPHIPTMRENIAKALNIDLDQINVKATTEEGLGFTGSGEGISSQSICLLVK.

A divalent metal cation contacts are provided by Asp8 and His10. Residues 8-10 (DVH) and 34-35 (HS) each bind 4-CDP-2-C-methyl-D-erythritol 2-phosphate. His42 is an a divalent metal cation binding site. 4-CDP-2-C-methyl-D-erythritol 2-phosphate contacts are provided by residues 56-58 (DIG), 61-65 (FPDTD), 100-106 (AQRPKMA), 132-135 (TTEE), and Phe139.

The protein belongs to the IspF family. Homotrimer. A divalent metal cation serves as cofactor.

It catalyses the reaction 4-CDP-2-C-methyl-D-erythritol 2-phosphate = 2-C-methyl-D-erythritol 2,4-cyclic diphosphate + CMP. The protein operates within isoprenoid biosynthesis; isopentenyl diphosphate biosynthesis via DXP pathway; isopentenyl diphosphate from 1-deoxy-D-xylulose 5-phosphate: step 4/6. Involved in the biosynthesis of isopentenyl diphosphate (IPP) and dimethylallyl diphosphate (DMAPP), two major building blocks of isoprenoid compounds. Catalyzes the conversion of 4-diphosphocytidyl-2-C-methyl-D-erythritol 2-phosphate (CDP-ME2P) to 2-C-methyl-D-erythritol 2,4-cyclodiphosphate (ME-CPP) with a corresponding release of cytidine 5-monophosphate (CMP). In Clostridium perfringens (strain ATCC 13124 / DSM 756 / JCM 1290 / NCIMB 6125 / NCTC 8237 / Type A), this protein is 2-C-methyl-D-erythritol 2,4-cyclodiphosphate synthase.